Here is a 154-residue protein sequence, read N- to C-terminus: Large ribosomal subunit protein uL13 (154 aa).

The protein belongs to the universal ribosomal protein uL13 family. As to quaternary structure, part of the 50S ribosomal subunit.

This protein is one of the early assembly proteins of the 50S ribosomal subunit, although it is not seen to bind rRNA by itself. It is important during the early stages of 50S assembly. The sequence is that of Large ribosomal subunit protein uL13 from Bradyrhizobium sp. (strain BTAi1 / ATCC BAA-1182).